We begin with the raw amino-acid sequence, 210 residues long: MIHGLLGRKIGMMQYFTAQGMAIPVTVIAAGPCIVTQIRTPERDGYSAVQLGYEEVEPRKLTKPQQGHLKASGGKMLRYLREFSADDPQAHTPGEVVTVELFRPGQKVDISGTSKGRGFAGVVKRHGFRGGPKTHGQSDRHRAPGSIGAGTTPGRVWKGQRMAGRMGGTRVTIQNLEVVEVLPEQNLLLVKGSVPGARNGLLQIRKAVKG.

The tract at residues 126 to 152 (HGFRGGPKTHGQSDRHRAPGSIGAGTT) is disordered.

This sequence belongs to the universal ribosomal protein uL3 family. As to quaternary structure, part of the 50S ribosomal subunit. Forms a cluster with proteins L14 and L19.

In terms of biological role, one of the primary rRNA binding proteins, it binds directly near the 3'-end of the 23S rRNA, where it nucleates assembly of the 50S subunit. In Chloroflexus aurantiacus (strain ATCC 29366 / DSM 635 / J-10-fl), this protein is Large ribosomal subunit protein uL3.